The sequence spans 144 residues: Large ribosomal subunit protein uL15 (144 aa).

Positions 1 to 14 (MKLHELKPNEGARD) are enriched in basic and acidic residues. The tract at residues 1–43 (MKLHELKPNEGARDVRKRVGRGTSSGTGKTAGRGQKGQKARSK) is disordered. The span at 23–35 (TSSGTGKTAGRGQ) shows a compositional bias: gly residues.

This sequence belongs to the universal ribosomal protein uL15 family. Part of the 50S ribosomal subunit.

Functionally, binds to the 23S rRNA. The chain is Large ribosomal subunit protein uL15 from Latilactobacillus sakei subsp. sakei (strain 23K) (Lactobacillus sakei subsp. sakei).